A 126-amino-acid chain; its full sequence is Protein Wnt-1 (126 aa).

Ser1 carries the O-palmitoleoyl serine; by PORCN lipid modification. Cys92 and Cys107 are joined by a disulfide. N-linked (GlcNAc...) asparagine glycosylation is found at Asn93 and Asn123.

Belongs to the Wnt family. In terms of processing, palmitoleoylation is required for efficient binding to frizzled receptors. Palmitoleoylation is necessary for proper trafficking to cell surface. Depalmitoleoylated by NOTUM, leading to inhibit Wnt signaling pathway.

It localises to the secreted. Its subcellular location is the extracellular space. The protein resides in the extracellular matrix. Ligand for members of the frizzled family of seven transmembrane receptors. Acts in the canonical Wnt signaling pathway by promoting beta-catenin-dependent transcriptional activation. Plays an essential role in the development of the embryonic brain and central nervous system (CNS). Has a role in osteoblast function, bone development and bone homeostasis. The polypeptide is Protein Wnt-1 (WNT-1) (Plestiodon skiltonianus (Western skink)).